A 60-amino-acid polypeptide reads, in one-letter code: Mastoparan-VT5 (60 aa).

The N-terminal stretch at 1–27 is a signal peptide; it reads MKNTILILFTAFIALLGFFGMIAEPLA. AXPX repeat units follow at residues 27-30, 31-34, 37-40, and 41-44; these read ADPL, ADPD, and ADPE. A propeptide spanning residues 28 to 45 is cleaved from the precursor; it reads DPLADPLPDADPDADPET.

It belongs to the MCD family. Mastoparan subfamily. In terms of tissue distribution, expressed by the venom gland.

The protein localises to the secreted. Functionally, the synthetic peptide shows weak antimicrobial activities against a few Gram-positive bacteria (only 2 on the 11 strains tested) and the fungus C.albicans. Does not show activity against all the Gram-negative bacteria tested. Exhibits little hemolytic activity against washed human erythrocytes. This Vespa tropica (Greater banded hornet) protein is Mastoparan-VT5.